The chain runs to 152 residues: Large ribosomal subunit protein bL9 (152 aa).

This sequence belongs to the bacterial ribosomal protein bL9 family.

Functionally, binds to the 23S rRNA. The protein is Large ribosomal subunit protein bL9 of Trichormus variabilis (strain ATCC 29413 / PCC 7937) (Anabaena variabilis).